The sequence spans 411 residues: MAAISPANATTAASLSLPQFSSTSSSLSSSSSPSFLNFKTASVSNRCIKCGVRSLENHSGHRSLDFLSNGDPISLINPNSSSPITMAAATSESGSKSSKRVCLFHSDETRDLAERIVAKSDCIELRSINWKKFDDGFPNLFIQNAQGIRGQHVAFLASFSSPAVIFEQLSVIYALPKLFVSSFTLVLPFFPTGTSERMEDEGDVATAFTLARILSNIPTSRGGPTSLVTFDIHALQERFYFGDTILPCFESGIPLLKSRLQSLPDSDNISIAFPDDGAWKRFHKQLQHYPTIVCNKVRMGDKRIVRIKEGDAEGRHVVIVDDLVQSGGTLIECQKVLAAHGAAKISAYVTHGIFPRSSWKRFKLDTKGDPAEGLSYFWITDSCGMTVKEVMNKPPFEVLSLAGSIASALQV.

Residues 1–39 (MAAISPANATTAASLSLPQFSSTSSSLSSSSSPSFLNFK) constitute a chloroplast transit peptide. Residues aspartate 231 and histidine 233 each coordinate Mg(2+). Positions 314–329 (GRHVVIVDDLVQSGGT) are binding of phosphoribosylpyrophosphate.

This sequence belongs to the ribose-phosphate pyrophosphokinase family.

It localises to the plastid. The protein resides in the chloroplast. The catalysed reaction is D-ribose 5-phosphate + ATP = 5-phospho-alpha-D-ribose 1-diphosphate + AMP + H(+). This is Ribose-phosphate pyrophosphokinase 3, chloroplastic (PRS3) from Arabidopsis thaliana (Mouse-ear cress).